A 93-amino-acid polypeptide reads, in one-letter code: Small ribosomal subunit protein bS6 (93 aa).

This sequence belongs to the bacterial ribosomal protein bS6 family.

Its function is as follows. Binds together with bS18 to 16S ribosomal RNA. This chain is Small ribosomal subunit protein bS6, found in Treponema denticola (strain ATCC 35405 / DSM 14222 / CIP 103919 / JCM 8153 / KCTC 15104).